Reading from the N-terminus, the 833-residue chain is Heat shock transcription factor (833 aa).

Met-1 is modified (N-acetylmethionine). The segment covering Met-1 to Ser-16 has biased composition (polar residues). Disordered regions lie at residues Met-1–Asp-31 and Asn-62–Leu-92. The segment covering Ser-69 to Phe-80 has biased composition (low complexity). Residue Thr-97 is modified to Phosphothreonine. A compositionally biased stretch (polar residues) spans Pro-150–Gln-161. Disordered regions lie at residues Pro-150 to Lys-170 and Gly-277 to Asn-309. A DNA-binding region spans residues Lys-170–Glu-259. The tract at residues Asn-260–Asn-280 is flexible linker. Over residues Gly-277–Asn-296 the composition is skewed to low complexity. Positions Glu-350–Ile-403 are involved in trimerization. Positions Ser-447 to Asn-457 are enriched in basic and acidic residues. Positions Ser-447 to Ile-493 are disordered. Phosphoserine is present on residues Ser-450, Ser-458, Ser-471, Ser-478, and Ser-528. Residues Ser-458–Thr-487 show a composition bias toward polar residues. The segment covering Arg-542–Leu-554 has biased composition (polar residues). 3 disordered regions span residues Arg-542–Ser-626, Gly-657–Pro-765, and Ser-778–Asn-799. The span at Pro-571–Thr-580 shows a compositional bias: acidic residues. Over residues Arg-588–Asp-600 the composition is skewed to polar residues. The segment covering Asp-610–Ser-626 has biased composition (basic and acidic residues). Residues Asn-660 to Asn-675 are compositionally biased toward low complexity. The segment covering Met-676 to Phe-687 has biased composition (polar residues). The segment covering Ser-697–Ser-713 has biased composition (low complexity). Composition is skewed to polar residues over residues Ala-727 to Gly-739, Asn-752 to Val-763, and Ser-778 to Asp-794.

The protein belongs to the HSF family. In terms of assembly, homotrimer. Homotrimerization increases the affinity of HSF1 to DNA. Post-translationally, exhibits temperature-dependent phosphorylation that activates the transcriptional capacity.

Its subcellular location is the nucleus. Functionally, DNA-binding transcription factor that specifically binds heat shock promoter elements (HSE) and activates transcription. This chain is Heat shock transcription factor, found in Saccharomyces cerevisiae (strain ATCC 204508 / S288c) (Baker's yeast).